Here is a 375-residue protein sequence, read N- to C-terminus: Glutamate 5-kinase (375 aa).

Lys17 contacts ATP. Substrate-binding residues include Ser57, Asp144, and Asn156. ATP is bound at residue 176–177 (TD). The 79-residue stretch at 283-361 (KGRLWLDTGA…HQIEQILGYV (79 aa)) folds into the PUA domain.

It belongs to the glutamate 5-kinase family.

Its subcellular location is the cytoplasm. It catalyses the reaction L-glutamate + ATP = L-glutamyl 5-phosphate + ADP. Its pathway is amino-acid biosynthesis; L-proline biosynthesis; L-glutamate 5-semialdehyde from L-glutamate: step 1/2. Its function is as follows. Catalyzes the transfer of a phosphate group to glutamate to form L-glutamate 5-phosphate. The protein is Glutamate 5-kinase of Nitrosococcus oceani (strain ATCC 19707 / BCRC 17464 / JCM 30415 / NCIMB 11848 / C-107).